We begin with the raw amino-acid sequence, 335 residues long: Anthranilate phosphoribosyltransferase (335 aa).

Residues Gly79, 82–83, Thr87, 89–92, 107–115, and Ala119 contribute to the 5-phospho-alpha-D-ribose 1-diphosphate site; these read GD, NIST, and KHGNRSASS. Residue Gly79 participates in anthranilate binding. Ser91 is a binding site for Mg(2+). Asn110 is a binding site for anthranilate. Arg165 is a binding site for anthranilate. Asp224 and Glu225 together coordinate Mg(2+).

Belongs to the anthranilate phosphoribosyltransferase family. Homodimer. It depends on Mg(2+) as a cofactor.

It catalyses the reaction N-(5-phospho-beta-D-ribosyl)anthranilate + diphosphate = 5-phospho-alpha-D-ribose 1-diphosphate + anthranilate. It functions in the pathway amino-acid biosynthesis; L-tryptophan biosynthesis; L-tryptophan from chorismate: step 2/5. Its function is as follows. Catalyzes the transfer of the phosphoribosyl group of 5-phosphorylribose-1-pyrophosphate (PRPP) to anthranilate to yield N-(5'-phosphoribosyl)-anthranilate (PRA). The polypeptide is Anthranilate phosphoribosyltransferase (Methanobrevibacter smithii (strain ATCC 35061 / DSM 861 / OCM 144 / PS)).